Here is a 198-residue protein sequence, read N- to C-terminus: NAD(P)H dehydrogenase (quinone) (198 aa).

A Flavodoxin-like domain is found at 4 to 190 (VLVLYYSAYG…EGAKYQGAHV (187 aa)). FMN-binding positions include 10–15 (SAYGHI) and 78–80 (TRF). Residue Tyr12 coordinates NAD(+). Trp98 is a binding site for substrate. FMN is bound by residues 113 to 119 (SSATQHG) and His134.

It belongs to the WrbA family. Requires FMN as cofactor.

The enzyme catalyses a quinone + NADH + H(+) = a quinol + NAD(+). It carries out the reaction a quinone + NADPH + H(+) = a quinol + NADP(+). This is NAD(P)H dehydrogenase (quinone) from Rhizobium johnstonii (strain DSM 114642 / LMG 32736 / 3841) (Rhizobium leguminosarum bv. viciae).